The primary structure comprises 176 residues: Large ribosomal subunit protein uL10 (176 aa).

This sequence belongs to the universal ribosomal protein uL10 family. In terms of assembly, part of the ribosomal stalk of the 50S ribosomal subunit. The N-terminus interacts with L11 and the large rRNA to form the base of the stalk. The C-terminus forms an elongated spine to which L12 dimers bind in a sequential fashion forming a multimeric L10(L12)X complex.

Its function is as follows. Forms part of the ribosomal stalk, playing a central role in the interaction of the ribosome with GTP-bound translation factors. The protein is Large ribosomal subunit protein uL10 of Hahella chejuensis (strain KCTC 2396).